The primary structure comprises 448 residues: Death-associated protein kinase 3 (448 aa).

The Protein kinase domain maps to 13–275 (YEMGEELGSG…IAQSLEHSWI (263 aa)). ATP is bound by residues 19–27 (LGSGQFAIV) and Lys42. The active-site Proton acceptor is Asp139. Residues 161–204 (DFGIAHRIEAGSEFKNIFGTPEFVAPEIVNYEPLGLEADMWSIG) are activation segment. Phosphothreonine occurs at positions 180 and 225. Residue Thr265 is modified to Phosphothreonine; by autocatalysis. Residue Thr265 is modified to Phosphothreonine; by ROCK1. Ser304 is modified (phosphoserine; by DAPK1). Ser306 carries the post-translational modification Phosphoserine; by autocatalysis and DAPK1. Residues Ser307, Ser313, and Ser321 each carry the phosphoserine; by DAPK1 modification. The interaction with CDC5L stretch occupies residues 390–448 (AQEEARAALLGAGGLKRRLCRLENRYDALAAQVAAEVQFVRDLVRALEQERLQAECGVR). The segment at 418-448 (LAAQVAAEVQFVRDLVRALEQERLQAECGVR) is required for interaction with ATF4 but not with PAWR. The segment at 422–436 (VAAEVQFVRDLVRAL) is leucine-zipper.

This sequence belongs to the protein kinase superfamily. CAMK Ser/Thr protein kinase family. DAP kinase subfamily. As to quaternary structure, homooligomer in its kinase-active form (homotrimers and homodimers are reported); monomeric in its kinase-inactive form. Homodimerization is required for activation segment autophosphorylation. Interacts with DAXX, ATF4, NLK, TCF7L2, UBE2D1, UBE2D2, UBE2D3 and CDC5L. Interacts with PAWR; also demonstrated in aorta smooth muscle cells indicative for the cytoskeletal targeting function of PAWR. Interacts with AR; enhanced by AATF. Interacts with LUZP1; the interaction is likely to occur throughout the cell cycle and reduces the LUZP1-mediated suppression of MYL9 phosphorylation. Requires Mg(2+) as cofactor. Ubiquitinated. Ubiquitination mediated by the UBE2D3 E3 ligase does not lead to proteasomal degradation, but influences promyelocytic leukemia protein nuclear bodies (PML-NBs) formation in the nucleus. Post-translationally, the phosphorylation status is critical for kinase activity, oligomerization and intracellular localization. Phosphorylation at Thr-180, Thr-225 and Thr-265 is essential for activity. The phosphorylated form is localized in the cytoplasm and nuclear translocation or retention is maximal when it is not phosphorylated. Phosphorylation increases the trimeric form, and its dephosphorylation favors a kinase-inactive monomeric form. In terms of tissue distribution, ubiquitously expressed in all tissue types examined. High levels in brain, heart, lung and spleen, lower expression in kidney, liver, skeletal muscle and testis. Isoform 2 is expressed in the smooth muscle.

It localises to the nucleus. The protein resides in the PML body. The protein localises to the cytoplasm. It is found in the cytoskeleton. Its subcellular location is the microtubule organizing center. It localises to the chromosome. The protein resides in the centromere. The protein localises to the spindle. It is found in the midbody. The catalysed reaction is L-seryl-[protein] + ATP = O-phospho-L-seryl-[protein] + ADP + H(+). It carries out the reaction L-threonyl-[protein] + ATP = O-phospho-L-threonyl-[protein] + ADP + H(+). With respect to regulation, a sequential activation is proposed: autophosphorylation at consensus sites is leading to dimerization of the catalytic domain and activation segment exchange (producing an active confirmation of both kinase modules in trans) followed by phosphorylation at Thr-180 in the activation segment and at other regulatory sites. Phosphorylation at Thr-180, Thr-225 and Thr-265 is essential for activity. Inhibited by pyridone 6 (K00225), a potent, ATP-competitive inhibitor. Phosphorylation at Thr-180, Thr-225 and Thr-265 is essential for activity. In terms of biological role, serine/threonine kinase which is involved in the regulation of apoptosis, autophagy, transcription, translation and actin cytoskeleton reorganization. Regulates both type I (caspase-dependent) apoptotic and type II (caspase-independent) autophagic cell deaths signal, depending on the cellular setting. Involved in formation of promyelocytic leukemia protein nuclear body (PML-NB). Involved in apoptosis involving PAWR which mediates cytoplasmic relocation; in vitro phosphorylates PAWR. Regulates myosin phosphorylation in both smooth muscle and non-muscle cells. In smooth muscle, regulates myosin either directly by phosphorylating MYL12B and MYL9 or through inhibition of smooth muscle myosin phosphatase (SMPP1M) via phosphorylation of PPP1R12A; the inhibition of SMPP1M functions to enhance muscle responsiveness to Ca(2+) and promote a contractile state. Phosphorylates MYL12B in non-muscle cells leading to reorganization of actin cytoskeleton such as in regulation of cell polarity and cell migration. Positively regulates canonical Wnt/beta-catenin signaling through interaction with NLK and TCF7L2; disrupts the NLK-TCF7L2 complex thereby influencing the phosphorylation of TCF7L2 by NLK. Phosphorylates RPL13A on 'Ser-77' upon interferon-gamma activation which is causing RPL13A release from the ribosome, RPL13A association with the GAIT complex and its subsequent involvement in transcript-selective translation inhibition. Phosphorylates STAT3 and enhances its transcriptional activity. Enhances transcription from AR-responsive promoters in a hormone- and kinase-dependent manner. Phosphorylates histone H3 on 'Thr-11' at centromeres during mitosis. The chain is Death-associated protein kinase 3 (Dapk3) from Rattus norvegicus (Rat).